Consider the following 407-residue polypeptide: Argininosuccinate synthase (407 aa).

An ATP-binding site is contributed by 10–18 (AYSGGLDTS). Positions 88 and 93 each coordinate L-citrulline. Gly118 is a binding site for ATP. Residues Thr120, Asn124, and Asp125 each coordinate L-aspartate. Asn124 provides a ligand contact to L-citrulline. L-citrulline-binding residues include Arg128, Ser177, Ser186, Glu263, and Tyr275.

Belongs to the argininosuccinate synthase family. Type 1 subfamily. Homotetramer.

Its subcellular location is the cytoplasm. It catalyses the reaction L-citrulline + L-aspartate + ATP = 2-(N(omega)-L-arginino)succinate + AMP + diphosphate + H(+). It functions in the pathway amino-acid biosynthesis; L-arginine biosynthesis; L-arginine from L-ornithine and carbamoyl phosphate: step 2/3. This is Argininosuccinate synthase from Clostridium botulinum (strain Alaska E43 / Type E3).